We begin with the raw amino-acid sequence, 101 residues long: Small ribosomal subunit protein bS18c (101 aa).

Positions 1–19 (MDKSKQPFRKSKRSFRRRL) are enriched in basic residues. The tract at residues 1–24 (MDKSKQPFRKSKRSFRRRLPPIGS) is disordered.

This sequence belongs to the bacterial ribosomal protein bS18 family. Part of the 30S ribosomal subunit.

The protein localises to the plastid. It is found in the chloroplast. In Amborella trichopoda, this protein is Small ribosomal subunit protein bS18c.